The sequence spans 349 residues: Ion-translocating oxidoreductase complex subunit D (349 aa).

3 helical membrane-spanning segments follow: residues 20–42, 77–99, and 124–144; these read VMQRVILCLLPGLVVQCAFFGWG, SAMLTAILIGVAIPPLAPWWMIV, and AMAAYVLLLVSFPVQMTTWIA. FMN phosphoryl threonine is present on Thr185. The next 5 helical transmembrane spans lie at 212-232, 239-259, 265-285, 291-311, and 315-335; these read STGVGWFWVNLAYLAGGLVLL, WHISTGVLLGLFVASSIGFLL, ASPLMHLFSGATMLAAFFIAT, ATSSRGRIIFGALIGVLVYII, and GGYPDAFAFAVLLANLCAPFI.

It belongs to the NqrB/RnfD family. The complex is composed of six subunits: RnfA, RnfB, RnfC, RnfD, RnfE and RnfG. It depends on FMN as a cofactor.

The protein localises to the cell inner membrane. In terms of biological role, part of a membrane-bound complex that couples electron transfer with translocation of ions across the membrane. The chain is Ion-translocating oxidoreductase complex subunit D from Shewanella baltica (strain OS223).